The primary structure comprises 280 residues: Ribosomal RNA small subunit methyltransferase A (280 aa).

The S-adenosyl-L-methionine site is built by His15, Leu17, Gly42, Glu64, Asp89, and Asn109.

The protein belongs to the class I-like SAM-binding methyltransferase superfamily. rRNA adenine N(6)-methyltransferase family. RsmA subfamily.

The protein resides in the cytoplasm. The enzyme catalyses adenosine(1518)/adenosine(1519) in 16S rRNA + 4 S-adenosyl-L-methionine = N(6)-dimethyladenosine(1518)/N(6)-dimethyladenosine(1519) in 16S rRNA + 4 S-adenosyl-L-homocysteine + 4 H(+). In terms of biological role, specifically dimethylates two adjacent adenosines (A1518 and A1519) in the loop of a conserved hairpin near the 3'-end of 16S rRNA in the 30S particle. May play a critical role in biogenesis of 30S subunits. The chain is Ribosomal RNA small subunit methyltransferase A from Synechococcus sp. (strain WH7803).